A 490-amino-acid polypeptide reads, in one-letter code: One cut domain family member 3 (490 aa).

3 disordered regions span residues 130-155 (GAHG…QRLA), 193-213 (LSPL…PPPP), and 287-316 (HGPH…AAAE). Residues 143–152 (ATAPPPPPPQ) are compositionally biased toward pro residues. A compositionally biased stretch (gly residues) spans 290–311 (HSGGGGPGGGGGAGGGSGGPGA). Residues 309–395 (PGAGAAAEEI…QRMSALRLAA (87 aa)) constitute a DNA-binding region (CUT). The segment at residues 411 to 470 (PKKQRLVFTDLQRRTLIAIFKENKRPSKEMQATISQQLGLELNTVSNFFMNARRRCMNRW) is a DNA-binding region (homeobox).

Belongs to the CUT homeobox family. In terms of tissue distribution, specifically expressed in brain, stomach and gut. Within the gut, expressed only in duodenum and jejunum.

It is found in the nucleus. Functionally, transcriptional activator. Binds the consensus DNA sequence 5'-DHWATTGAYTWWD-3' on a variety of gene promoters such as those of HNF3B and TTR. The protein is One cut domain family member 3 (Onecut3) of Mus musculus (Mouse).